The chain runs to 214 residues: 3-demethoxyubiquinol 3-hydroxylase (214 aa).

Residues E63, E93, H96, E145, E177, and H180 each coordinate Fe cation.

Belongs to the COQ7 family. Fe cation is required as a cofactor.

The protein resides in the cell membrane. It catalyses the reaction a 5-methoxy-2-methyl-3-(all-trans-polyprenyl)benzene-1,4-diol + AH2 + O2 = a 3-demethylubiquinol + A + H2O. It participates in cofactor biosynthesis; ubiquinone biosynthesis. Catalyzes the hydroxylation of 2-nonaprenyl-3-methyl-6-methoxy-1,4-benzoquinol during ubiquinone biosynthesis. The chain is 3-demethoxyubiquinol 3-hydroxylase from Psychrobacter arcticus (strain DSM 17307 / VKM B-2377 / 273-4).